A 279-amino-acid polypeptide reads, in one-letter code: Acetylglutamate kinase (279 aa).

Residues 64–65 (GG), R86, and N177 each bind substrate.

It belongs to the acetylglutamate kinase family. ArgB subfamily.

It is found in the cytoplasm. The catalysed reaction is N-acetyl-L-glutamate + ATP = N-acetyl-L-glutamyl 5-phosphate + ADP. Its pathway is amino-acid biosynthesis; L-arginine biosynthesis; N(2)-acetyl-L-ornithine from L-glutamate: step 2/4. In terms of biological role, catalyzes the ATP-dependent phosphorylation of N-acetyl-L-glutamate. The protein is Acetylglutamate kinase of Campylobacter jejuni subsp. jejuni serotype O:2 (strain ATCC 700819 / NCTC 11168).